The chain runs to 175 residues: Gamma-crystallin B (175 aa).

2 Beta/gamma crystallin 'Greek key' domains span residues 2–40 and 41–83; these read GKITFFEDRSFQGRCYECSSDCPNLQTYFSRCNSVRVDS and GCWM…CLIP. Residues 84–88 form a connecting peptide region; sequence QHSGT. 2 Beta/gamma crystallin 'Greek key' domains span residues 89–129 and 130–172; these read YRMR…NVME and GCWV…RRVM.

Belongs to the beta/gamma-crystallin family.

Crystallins are the dominant structural components of the vertebrate eye lens. The protein is Gamma-crystallin B (Crygb) of Mus musculus (Mouse).